The chain runs to 86 residues: Toxin To8 (86 aa).

An N-terminal signal peptide occupies residues 1–20 (MTRFVLFISCFFLIGMVVEC). An LCN-type CS-alpha/beta domain is found at 21–83 (KEGYLLGSRG…LWESDTNECG (63 aa)). Cystine bridges form between cysteine 31-cysteine 82, cysteine 35-cysteine 57, cysteine 43-cysteine 63, and cysteine 47-cysteine 65. Cysteine 82 carries the post-translational modification Cysteine amide.

This sequence belongs to the long (4 C-C) scorpion toxin superfamily. Sodium channel inhibitor family. Beta subfamily. Expressed by the venom gland.

It is found in the secreted. Beta toxins bind voltage-independently at site-4 of sodium channels (Nav) and shift the voltage of activation toward more negative potentials thereby affecting sodium channel activation and promoting spontaneous and repetitive firing. This is Toxin To8 from Tityus obscurus (Amazonian scorpion).